Consider the following 637-residue polypeptide: Chaperone protein HtpG (637 aa).

An a; substrate-binding region spans residues 1 to 345; sequence MSQQETHGFQ…SNDLPLNVSR (345 aa). The interval 346–562 is b; it reads EILQDNHITK…EGEMSSQMIK (217 aa). The tract at residues 563 to 637 is c; the sequence is LMQAAGQPVP…MNQMLLANLK (75 aa).

Belongs to the heat shock protein 90 family. In terms of assembly, homodimer.

Its subcellular location is the cytoplasm. In terms of biological role, molecular chaperone. Has ATPase activity. In Shewanella sp. (strain ANA-3), this protein is Chaperone protein HtpG.